The primary structure comprises 375 residues: MSSLNLDDFSDLIERPDGGVRRDAEARRERQIVPPGSLGRLDDLGEWLAAAQSAVPVRPVERPRVVLFAGDHGVASLGVSARPAGSADQLVRAVLEGASPASILARRLNVPVRVVDMALDCEPDALPESVVRHRVRRGSGRIDVEDALTLEEAEAAFRAGVAVADEEADAGTDLVVLGDVSVGGTTAAAVLIAALCGTDASVVTGRGGLAIDDLAWMRKCAAVRDALRRARPVLGDQLQLLAAVGGADLAAMTGFLLQSAARKTPVILDGVVSAACALVGQRIAFRAPDWWLAGQNSGEPAQAKALDRMALEPLLNHGVTVGEGAGALLALPLVQAAAALAAELPEKPEELEAGEGPEAAEESSPEPENPEALAE.

The active-site Proton acceptor is the Glu-323. Residues Leu-344 to Glu-375 are disordered. The span at Leu-351–Glu-375 shows a compositional bias: acidic residues.

This sequence belongs to the CobT family.

The enzyme catalyses 5,6-dimethylbenzimidazole + nicotinate beta-D-ribonucleotide = alpha-ribazole 5'-phosphate + nicotinate + H(+). It participates in nucleoside biosynthesis; alpha-ribazole biosynthesis; alpha-ribazole from 5,6-dimethylbenzimidazole: step 1/2. Functionally, catalyzes the synthesis of alpha-ribazole-5'-phosphate from nicotinate mononucleotide (NAMN) and 5,6-dimethylbenzimidazole (DMB). This is Nicotinate-nucleotide--dimethylbenzimidazole phosphoribosyltransferase from Streptomyces avermitilis (strain ATCC 31267 / DSM 46492 / JCM 5070 / NBRC 14893 / NCIMB 12804 / NRRL 8165 / MA-4680).